We begin with the raw amino-acid sequence, 294 residues long: Cytidine deaminase (294 aa).

CMP/dCMP-type deaminase domains are found at residues 48 to 168 and 186 to 294; these read DEDA…FGPK and LTGN…VLLG. Residue 89-91 participates in substrate binding; that stretch reads NME. His-102 lines the Zn(2+) pocket. Glu-104 acts as the Proton donor in catalysis. Residues Cys-129 and Cys-132 each contribute to the Zn(2+) site.

Belongs to the cytidine and deoxycytidylate deaminase family. As to quaternary structure, homodimer. Zn(2+) is required as a cofactor.

The enzyme catalyses cytidine + H2O + H(+) = uridine + NH4(+). It carries out the reaction 2'-deoxycytidine + H2O + H(+) = 2'-deoxyuridine + NH4(+). Functionally, this enzyme scavenges exogenous and endogenous cytidine and 2'-deoxycytidine for UMP synthesis. This chain is Cytidine deaminase, found in Salmonella typhi.